The chain runs to 247 residues: MQTQVLFEHPLNEKMRTWLRIEFLIQQLTVNLPIVDHAGALHFFRNVSELLDVFERGEVRTELLKELDRQQRKLQTWIGVPGVDQSRIEALIQQLKAAGSVLISAPRIGQFLREDRLIALVRQRLSIPGGCCSFDLPTLHIWLHLPQAQRDCQVETWIASLNPLTQALTMVLDLIRQSAPFRKQTSLNGFYQDNGGDADLLRLNLSLDSQLYPQISGHKSRFAIRFMPLDTENGQVPERLDFELACC.

The protein belongs to the ZapD family. In terms of assembly, interacts with FtsZ.

Its subcellular location is the cytoplasm. Its function is as follows. Cell division factor that enhances FtsZ-ring assembly. Directly interacts with FtsZ and promotes bundling of FtsZ protofilaments, with a reduction in FtsZ GTPase activity. This is Cell division protein ZapD from Escherichia coli O157:H7.